The sequence spans 984 residues: METKGYHSLPEGLDMERRWGQVSQTVEHSSLGSTERTDENNYMEIVNVSCVSGAIPNNSTQGSSKEKHELLPCLQQDNNRPGILTSDIKTELESKELSATVAESMGLYMDSVRDADYSYEQQNQQRSMSPAKIYQNVEQLVKFYKENGHRPSTLSCVNRPLRSFMSDSGSSVNGGVMRAIVKSPIMCHEKSPSVCSPLNMTSSVCSPAGINSVSSTTASFGSFPVHSPITQGTPLTCSPNVENRGSRSHSPAHASNVGSPLSSPLSSMKSSISSPPSHCSVKSPVSSPNNVTLRSSVSSPANINNSRCSVSSPSNTNNRSTLSSPAASTVGSICSPVNNAFSYTASGTSAGSSTSRDVVPSPDTQEKGAQEVLFPKTEEVESAISNGVTGQLNIVQYIKPEPDGAFSSSCLGGNSKINSDSPFSVPIKQESTKHSCSGTSFKGNPTVNPFPFMDGSYFSFMDDKDYYSLSGILGPPVPGFDGNCEGSGFPVGIKQEPDDGSYYPEASIPSSAIVGVNSGGQSFHYRIGAQGTISLSRSARDQSFQHLSSFPPVNTLVESWKSHGDLSSRRSDGYPVLEYIPENVSSSTLRSVSTGSSRPSKICLVCGDEASGCHYGVVTCGSCKVFFKRAVEGQHNYLCAGRNDCIIDKIRRKNCPACRLQKCLQAGMNLGARKSKKLGKLKGIHEEQPQQQQPPPPPPPPQSPEEGTTYIAPAKEPSVNTALVPQLSTISRALTPSPAMILENIEPEVVYAGYDNSKPDTAENLLSTLNRLAGKQMIQVVKWAKVLPGFKNLPLEDQITLIQYSWMCLSSFALSWRSYKHTNSQFLYFAPDLVFNEEKMHQSAMYELCQGMHQISLQFIRLQLTFEEYTIMKVLLLLSTVPKDGLKSQAAFEEMRTNYIKELRKMVTKCPNNSGQSWQRFYQLTKLLDSMHDLVNDLLEFCFYTFRESQALKVEFPAMLVEIISDQLPKVESGNAKPLYFHRK.

Residues 1-602 are modulating; sequence METKGYHSLP…STGSSRPSKI (602 aa). Positions 231–243 are enriched in polar residues; the sequence is QGTPLTCSPNVEN. Disordered regions lie at residues 231–329 and 346–369; these read QGTP…AAST and SGTS…EKGA. Ser-250, Ser-259, Ser-283, Ser-287, and Ser-299 each carry phosphoserine. Residues 259 to 291 are compositionally biased toward low complexity; the sequence is SPLSSPLSSMKSSISSPPSHCSVKSPVSSPNNV. A compositionally biased stretch (polar residues) spans 292–329; that stretch reads TLRSSVSSPANINNSRCSVSSPSNTNNRSTLSSPAAST. Residues 346-355 are compositionally biased toward low complexity; that stretch reads SGTSAGSSTS. Zn(2+) is bound by residues Cys-603, Cys-606, Cys-620, Cys-623, Cys-639, Cys-645, Cys-655, and Cys-658. 2 NR C4-type zinc fingers span residues 603–623 and 639–663; these read CLVC…CGSC and CAGR…LQKC. The segment at residues 603-668 is a DNA-binding region (nuclear receptor); that stretch reads CLVCGDEASG…RLQKCLQAGM (66 aa). Positions 669–725 are hinge; it reads NLGARKSKKLGKLKGIHEEQPQQQQPPPPPPPPQSPEEGTTYIAPAKEPSVNTALVP. The segment at 684 to 710 is disordered; sequence IHEEQPQQQQPPPPPPPPQSPEEGTTY. The span at 692 to 703 shows a compositional bias: pro residues; the sequence is QQPPPPPPPPQS. Positions 726 to 964 constitute an NR LBD domain; sequence QLSTISRALT…EFPAMLVEII (239 aa). 21-hydroxyprogesterone is bound by residues Asn-770 and Gln-776. Asn-770 and Gln-776 together coordinate aldosterone. Progesterone-binding residues include Asn-770 and Gln-776. Residues 782 to 785 form an important for coactivator binding region; it reads KWAK. 21-hydroxyprogesterone contacts are provided by Arg-817 and Thr-945. Arg-817 and Thr-945 together coordinate aldosterone. Progesterone-binding residues include Arg-817 and Thr-945.

It belongs to the nuclear hormone receptor family. NR3 subfamily. As to quaternary structure, heteromultimeric cytoplasmic complex with HSP90, HSP70, and FKBP4, in the absence of ligand. After ligand binding, it translocates to the nucleus and binds to DNA as a homodimer and as a heterodimer with NR3C1. Binds the coactivator NCOA2. May interact with HSD11B2 in the absence of ligand. Binds the coactivators NCOA1, TIF1 and NRIP1. Phosphorylated.

Its subcellular location is the cytoplasm. It is found in the nucleus. The protein resides in the endoplasmic reticulum membrane. Receptor for both mineralocorticoids (MC) such as aldosterone and glucocorticoids (GC) such as corticosterone or cortisol. Binds to mineralocorticoid response elements (MRE) and transactivates target genes. The effect of MC is to increase ion and water transport and thus raise extracellular fluid volume and blood pressure and lower potassium levels. The polypeptide is Mineralocorticoid receptor (NR3C2) (Aotus nancymaae (Ma's night monkey)).